Reading from the N-terminus, the 252-residue chain is MPRFPRTLPRLTAVLLLACTAFSAAAHGNHTHWGYTGHDSPESWGNLSEEFRLCSTGKNQSPVNITETVSGKLPAIKVNYKPSMVDVENNGHTIQVNYPEGGNTLTVNGRTYTLKQFHFHVPSENQIKGRTFPMEAHFVHLDENKQPLVLAVLYEAGKTNGRLSSIWNVMPMTAGKVKLNQPFDASTLLPKRLKYYRFAGSLTTPPCTEGVSWLVLKTYDHIDQAQAEKFTRAVGSENNRPVQPLNARVVIE.

A signal peptide spans 1-26 (MPRFPRTLPRLTAVLLLACTAFSAAA). Residues 31 to 252 (THWGYTGHDS…QPLNARVVIE (222 aa)) form the Alpha-carbonic anhydrase domain. C54 and C207 are disulfide-bonded. H92 acts as the Proton acceptor in catalysis. Zn(2+)-binding residues include H118, H120, and H137. Residue 203 to 204 (TT) coordinates substrate.

This sequence belongs to the alpha-carbonic anhydrase family. In terms of assembly, homodimer. The cofactor is Zn(2+).

The protein localises to the periplasm. It catalyses the reaction hydrogencarbonate + H(+) = CO2 + H2O. Reversible hydration of carbon dioxide. This Neisseria gonorrhoeae protein is Carbonic anhydrase (cah).